The sequence spans 162 residues: uncharacterized protein (162 aa).

The segment covering 65 to 76 (EEKPLEVAQDRN) has biased composition (basic and acidic residues). Positions 65-93 (EEKPLEVAQDRNNKRKAPSHLEPAHDFIS) are disordered.

This is an uncharacterized protein from Bacillus subtilis (strain 168).